Consider the following 542-residue polypeptide: MHSSSVHVPLIEFLKNRIYLGAYDHHKRDTEDLAYFTVEDALPYNAFYMDFGPLNIGHLYRFAVLLHKKLNEDSTQGKGLVIYSSTSPKERANLACLLCCYMILLQNWAPHQVLQPIAQITPPLQAFRDAGYSSADYEITIQDVVYAMWRAKERGMIDLAKFDLDEYEQYERVDQGDFNVISKDFIAFASPQQSKRGGLNEPFQKVLEYFVENNVQLVVRLNSHLYDAKEFTKRNIKHIDMIFDDGTCPTLEYVQKFIGAAECIINKGGKIAVHCKAGLGRTGCLIGAHLIYTHGFTANECIAYMRMIRPGMVVGPQQHWLYLHHDDFRSWRHTMIVDNRPDPLIGNLFPLCSYEDYKQRLKEAKRKERLQLQQQLTSPLADSSVINTPIRRRKVSGALASKIQTVVPIESPGQPRKYFEDSEDIDEVEMVNNSDDENTMQDIIQSSPARYDSVTPKTKDNSDWRVLRSISTNNVSSQQSIHIIKTTTTKTVNETLSSPPGTSPTNVLRVSKARSKNRIASGNSQTSRAHSGGVRKLSGKKH.

Residues 177 to 334 (DFNVISKDFI…HDDFRSWRHT (158 aa)) form the Tyrosine-protein phosphatase domain. C275 acts as the Phosphocysteine intermediate in catalysis. The interval 516-542 (KNRIASGNSQTSRAHSGGVRKLSGKKH) is disordered. Over residues 518-529 (RIASGNSQTSRA) the composition is skewed to polar residues.

It belongs to the protein-tyrosine phosphatase family. Non-receptor class CDC14 subfamily. Post-translationally, mainly phosphorylated as the cells are passing through mitosis in yeast form cells. Phosphorylation is delayed in hyphal-induced cells, indicating that the timing of cell-cycle progression occurs with different kinetics in hyphae and in yeast cells.

The protein resides in the nucleus. It is found in the nucleolus. It localises to the cytoplasm. Its subcellular location is the bud neck. The protein localises to the cytoskeleton. The protein resides in the spindle pole. It is found in the cell septum. It carries out the reaction O-phospho-L-tyrosyl-[protein] + H2O = L-tyrosyl-[protein] + phosphate. Functionally, protein phosphatase which antagonizes mitotic cyclin-dependent kinase CDC28, the inactivation of which is essential for exit from mitosis. To access its substrates, is released from nucleolar sequestration during mitosis. Plays an essential in coordinating the nuclear division cycle with cytokinesis through the cytokinesis checkpoint. Involved in chromosome segregation, where it is required for meiosis I spindle dissambly as well as for establishing two consecutive chromosome segregation phases. Plays a role in the expression of hydrolase genes such as CHT3 and ENG1 involved in septum degradation after cytokinesis. Also required for ACE2 localization to the daughter nucleus. Required for invasive and hyphal growth. In Candida albicans (strain SC5314 / ATCC MYA-2876) (Yeast), this protein is Tyrosine-protein phosphatase CDC14 (CDC14).